Consider the following 244-residue polypeptide: NAD-dependent protein deacylase SIR2rp3 (244 aa).

The Deacetylase sirtuin-type domain maps to 1–239 (MRRPNGMIAI…PAWADEVLHG (239 aa)). Residue 13-32 (GAGISAESGISTFRDQNGLW) coordinates NAD(+). Positions 57 and 60 each coordinate substrate. 95–98 (QNID) is a binding site for NAD(+). His-113 (proton acceptor) is an active-site residue. 2 residues coordinate Zn(2+): Cys-121 and Cys-141. Residues 181-183 (GTS) and Ala-225 each bind NAD(+).

This sequence belongs to the sirtuin family. Class III subfamily. Zn(2+) is required as a cofactor.

The protein resides in the mitochondrion. It catalyses the reaction N(6)-malonyl-L-lysyl-[protein] + NAD(+) + H2O = 2''-O-malonyl-ADP-D-ribose + nicotinamide + L-lysyl-[protein]. The enzyme catalyses N(6)-succinyl-L-lysyl-[protein] + NAD(+) + H2O = 2''-O-succinyl-ADP-D-ribose + nicotinamide + L-lysyl-[protein]. It carries out the reaction N(6)-glutaryl-L-lysyl-[protein] + NAD(+) + H2O = 2''-O-glutaryl-ADP-D-ribose + nicotinamide + L-lysyl-[protein]. NAD-dependent lysine demalonylase, desuccinylase and deglutarylase that specifically removes malonyl, succinyl and glutaryl groups on target proteins. Has weak NAD-dependent protein deacetylase activity; however this activity may not be physiologically relevant in vivo. In Trypanosoma brucei brucei (strain 927/4 GUTat10.1), this protein is NAD-dependent protein deacylase SIR2rp3 (SIR2rp3).